We begin with the raw amino-acid sequence, 336 residues long: Transmembrane protein 120A (336 aa).

Residues Met-1–Glu-131 lie on the Cytoplasmic side of the membrane. Position 129 (Lys-129) interacts with CoA. A helical membrane pass occupies residues Tyr-132–Arg-151. The Extracellular segment spans residues Phe-152 to Arg-157. The helical transmembrane segment at Val-158–Ile-176 threads the bilayer. The Cytoplasmic segment spans residues Arg-177–Lys-189. Residues Ser-186 and Arg-187 each coordinate CoA. The chain crosses the membrane as a helical span at residues Gly-190–Thr-208. Topologically, residues Trp-209–Met-217 are extracellular. The chain crosses the membrane as a helical span at residues Phe-218 to Tyr-239. Positions 236, 239, and 240 each coordinate CoA. Topologically, residues Gln-240–Arg-269 are cytoplasmic. The chain crosses the membrane as a helical span at residues Gly-270–Phe-293. Over Lys-294–Glu-303 the chain is Extracellular. Residues Trp-304–His-329 traverse the membrane as a helical segment. The Cytoplasmic segment spans residues Gln-330–Asn-336. Lys-331 lines the CoA pocket.

This sequence belongs to the TMEM120 family. In terms of assembly, homodimer.

It localises to the cell membrane. Its subcellular location is the nucleus inner membrane. The protein resides in the endoplasmic reticulum. Functionally, multifunctional protein involved in mechanosensation, and plays an essential role in lipid metabolism. May function as a potential ion channel involved in sensing mechanical stimuli. TMEM120A is structurally similar to a lipid-modifying enzyme, ELOVL7, and contains a bound coenzyme A molecule, which suggests it might function as an enzyme in lipid metabolism. The protein is Transmembrane protein 120A of Xenopus tropicalis (Western clawed frog).